We begin with the raw amino-acid sequence, 150 residues long: Ribosome-binding factor A (150 aa).

A disordered region spans residues 119–150; the sequence is VAERAKSAQPAGEPDPYRFDGAAAADDDEPAT.

It belongs to the RbfA family. In terms of assembly, monomer. Binds 30S ribosomal subunits, but not 50S ribosomal subunits or 70S ribosomes.

The protein resides in the cytoplasm. Functionally, one of several proteins that assist in the late maturation steps of the functional core of the 30S ribosomal subunit. Associates with free 30S ribosomal subunits (but not with 30S subunits that are part of 70S ribosomes or polysomes). Required for efficient processing of 16S rRNA. May interact with the 5'-terminal helix region of 16S rRNA. This Acidothermus cellulolyticus (strain ATCC 43068 / DSM 8971 / 11B) protein is Ribosome-binding factor A.